A 554-amino-acid chain; its full sequence is 5'-AMP-activated protein kinase catalytic subunit alpha-1 (554 aa).

Residues 22–274 enclose the Protein kinase domain; the sequence is YILGDTLGVG…IKDIREHEWF (253 aa). At Thr-27 the chain carries Phosphothreonine. ATP is bound by residues 28–36 and Lys-51; that span reads LGVGTFGKV. Asp-145 serves as the catalytic Proton acceptor. Residue Thr-178 is modified to Phosphothreonine; by LKB1 and CaMKK2. Thr-264 and Thr-350 each carry phosphothreonine. The segment at 297-376 is AIS; that stretch reads EALKEVCEKF…PERVPFLVAE (80 aa). Ser-351 carries the post-translational modification Phosphoserine. Ser-355 is subject to Phosphoserine; by ULK1. Thr-363 carries the post-translational modification Phosphothreonine; by ULK1. Residue Thr-377 is modified to Phosphothreonine. Ser-392 is subject to Phosphoserine; by ULK1. At Ser-462 the chain carries Phosphoserine. A compositionally biased stretch (polar residues) spans 480–500; it reads KSGTATPQRSGSVSNYRSCQR. The tract at residues 480–531 is disordered; that stretch reads KSGTATPQRSGSVSNYRSCQRSDSDAEAQGKSSEVSLTSSVTSLDSSPVDLT. Ser-481 is modified (phosphoserine; by ULK1). Thr-483 is modified (phosphothreonine; by ULK1). At Thr-485 the chain carries Phosphothreonine. Ser-491, Ser-503, Ser-519, and Ser-522 each carry phosphoserine. A compositionally biased stretch (low complexity) spans 511 to 530; the sequence is SSEVSLTSSVTSLDSSPVDL.

The protein belongs to the protein kinase superfamily. CAMK Ser/Thr protein kinase family. SNF1 subfamily. As to quaternary structure, AMPK is a heterotrimer of an alpha catalytic subunit (PRKAA1 or PRKAA2), a beta (PRKAB1 or PRKAB2) and a gamma non-catalytic subunits (PRKAG1, PRKAG2 or PRKAG3). Interacts with FNIP1 and FNIP2. Requires Mg(2+) as cofactor. In terms of processing, ubiquitinated. Post-translationally, phosphorylated at Thr-183 by STK11/LKB1 in complex with STE20-related adapter-alpha (STRADA) pseudo kinase and CAB39. Also phosphorylated at Thr-183 by CAMKK2; triggered by a rise in intracellular calcium ions, without detectable changes in the AMP/ATP ratio. CAMKK1 can also phosphorylate Thr-183, but at a much lower level. Dephosphorylated by protein phosphatase 2A and 2C (PP2A and PP2C). Phosphorylated by ULK1 and ULK2; leading to negatively regulate AMPK activity and suggesting the existence of a regulatory feedback loop between ULK1, ULK2 and AMPK. Dephosphorylated by PPM1A and PPM1B. Glycosylated; O-GlcNAcylated by OGT, promoting the AMP-activated protein kinase (AMPK) activity.

It is found in the cytoplasm. The protein resides in the nucleus. The catalysed reaction is L-seryl-[protein] + ATP = O-phospho-L-seryl-[protein] + ADP + H(+). The enzyme catalyses L-threonyl-[protein] + ATP = O-phospho-L-threonyl-[protein] + ADP + H(+). It carries out the reaction L-seryl-[acetyl-CoA carboxylase] + ATP = O-phospho-L-seryl-[acetyl-CoA carboxylase] + ADP + H(+). It catalyses the reaction L-seryl-[3-hydroxy-3-methylglutaryl-coenzyme A reductase] + ATP = O-phospho-L-seryl-[3-hydroxy-3-methylglutaryl-coenzyme A reductase] + ADP + H(+). The catalysed reaction is L-seryl-[tau protein] + ATP = O-phospho-L-seryl-[tau protein] + ADP + H(+). The enzyme catalyses L-threonyl-[tau protein] + ATP = O-phospho-L-threonyl-[tau protein] + ADP + H(+). Its activity is regulated as follows. Activated by phosphorylation on Thr-183. Binding of AMP to non-catalytic gamma subunit (PRKAG1, PRKAG2 or PRKAG3) results in allosteric activation, inducing phosphorylation on Thr-183. AMP-binding to gamma subunit also sustains activity by preventing dephosphorylation of Thr-183. ADP also stimulates Thr-183 phosphorylation, without stimulating already phosphorylated AMPK. ATP promotes dephosphorylation of Thr-183, rendering the enzyme inactive. Under physiological conditions AMPK mainly exists in its inactive form in complex with ATP, which is much more abundant than AMP. Selectively inhibited by compound C (6-[4-(2-Piperidin-1-yl-ethoxy)-phenyl)]-3-pyridin-4-yl-pyyrazolo[1,5-a] pyrimidine. Activated by resveratrol, a natural polyphenol present in red wine, and S17834, a synthetic polyphenol. Catalytic subunit of AMP-activated protein kinase (AMPK), an energy sensor protein kinase that plays a key role in regulating cellular energy metabolism. In response to reduction of intracellular ATP levels, AMPK activates energy-producing pathways and inhibits energy-consuming processes: inhibits protein, carbohydrate and lipid biosynthesis, as well as cell growth and proliferation. AMPK acts via direct phosphorylation of metabolic enzymes, and by longer-term effects via phosphorylation of transcription regulators. Regulates lipid synthesis by phosphorylating and inactivating lipid metabolic enzymes such as ACACA, ACACB, GYS1, HMGCR and LIPE; regulates fatty acid and cholesterol synthesis by phosphorylating acetyl-CoA carboxylase (ACACA and ACACB) and hormone-sensitive lipase (LIPE) enzymes, respectively. Promotes lipolysis of lipid droplets by mediating phosphorylation of isoform 1 of CHKA (CHKalpha2). Regulates insulin-signaling and glycolysis by phosphorylating IRS1, PFKFB2 and PFKFB3. AMPK stimulates glucose uptake in muscle by increasing the translocation of the glucose transporter SLC2A4/GLUT4 to the plasma membrane, possibly by mediating phosphorylation of TBC1D4/AS160. Regulates transcription and chromatin structure by phosphorylating transcription regulators involved in energy metabolism such as CRTC2/TORC2, FOXO3, histone H2B, HDAC5, MEF2C, MLXIPL/ChREBP, EP300, HNF4A, p53/TP53, SREBF1, SREBF2 and PPARGC1A. Acts as a key regulator of glucose homeostasis in liver by phosphorylating CRTC2/TORC2, leading to CRTC2/TORC2 sequestration in the cytoplasm. In response to stress, phosphorylates 'Ser-36' of histone H2B (H2BS36ph), leading to promote transcription. Acts as a key regulator of cell growth and proliferation by phosphorylating FNIP1, TSC2, RPTOR, WDR24 and ATG1/ULK1: in response to nutrient limitation, negatively regulates the mTORC1 complex by phosphorylating RPTOR component of the mTORC1 complex and by phosphorylating and activating TSC2. Also phosphorylates and inhibits GATOR2 subunit WDR24 in response to nutrient limitation, leading to suppress glucose-mediated mTORC1 activation. In response to energetic stress, phosphorylates FNIP1, inactivating the non-canonical mTORC1 signaling, thereby promoting nuclear translocation of TFEB and TFE3, and inducing transcription of lysosomal or autophagy genes. In response to nutrient limitation, promotes autophagy by phosphorylating and activating ATG1/ULK1. In that process also activates WDR45/WIPI4. Phosphorylates CASP6, thereby preventing its autoprocessing and subsequent activation. In response to nutrient limitation, phosphorylates transcription factor FOXO3 promoting FOXO3 mitochondrial import. Also acts as a regulator of cellular polarity by remodeling the actin cytoskeleton; probably by indirectly activating myosin. AMPK also acts as a regulator of circadian rhythm by mediating phosphorylation of CRY1, leading to destabilize it. May regulate the Wnt signaling pathway by phosphorylating CTNNB1, leading to stabilize it. Also has tau-protein kinase activity: in response to amyloid beta A4 protein (APP) exposure, activated by CAMKK2, leading to phosphorylation of MAPT/TAU; however the relevance of such data remains unclear in vivo. Also phosphorylates CFTR, EEF2K, KLC1, NOS3 and SLC12A1. Regulates hepatic lipogenesis. Activated via SIRT3, represses sterol regulatory element-binding protein (SREBP) transcriptional activities and ATP-consuming lipogenesis to restore cellular energy balance. Upon stress, regulates mitochondrial fragmentation through phosphorylation of MTFR1L. In Pongo abelii (Sumatran orangutan), this protein is 5'-AMP-activated protein kinase catalytic subunit alpha-1 (PRKAA1).